Consider the following 299-residue polypeptide: UDP-N-acetylenolpyruvoylglucosamine reductase (299 aa).

In terms of domain architecture, FAD-binding PCMH-type spans 29 to 193 (RIGGPAEIFL…TAASLRFRKA (165 aa)). R173 is a catalytic residue. S222 serves as the catalytic Proton donor. Residue E292 is part of the active site.

The protein belongs to the MurB family. It depends on FAD as a cofactor.

It is found in the cytoplasm. The enzyme catalyses UDP-N-acetyl-alpha-D-muramate + NADP(+) = UDP-N-acetyl-3-O-(1-carboxyvinyl)-alpha-D-glucosamine + NADPH + H(+). It participates in cell wall biogenesis; peptidoglycan biosynthesis. In terms of biological role, cell wall formation. The sequence is that of UDP-N-acetylenolpyruvoylglucosamine reductase from Syntrophotalea carbinolica (strain DSM 2380 / NBRC 103641 / GraBd1) (Pelobacter carbinolicus).